We begin with the raw amino-acid sequence, 278 residues long: Putative phosphoenolpyruvate synthase regulatory protein (278 aa).

158–165 (GVSRSGKT) is an ADP binding site.

This sequence belongs to the pyruvate, phosphate/water dikinase regulatory protein family. PSRP subfamily.

It catalyses the reaction [pyruvate, water dikinase] + ADP = [pyruvate, water dikinase]-phosphate + AMP + H(+). The enzyme catalyses [pyruvate, water dikinase]-phosphate + phosphate + H(+) = [pyruvate, water dikinase] + diphosphate. Bifunctional serine/threonine kinase and phosphorylase involved in the regulation of the phosphoenolpyruvate synthase (PEPS) by catalyzing its phosphorylation/dephosphorylation. In Acinetobacter baylyi (strain ATCC 33305 / BD413 / ADP1), this protein is Putative phosphoenolpyruvate synthase regulatory protein.